A 570-amino-acid polypeptide reads, in one-letter code: CRISPR-associated protein Cas8a1/Csx13 (570 aa).

2 disordered regions span residues 1 to 23 (MACM…AGLR) and 551 to 570 (GGEA…SEQS).

Belongs to the CRISPR-associated protein Cas8a1/Csx13 family. Myxan subtype subfamily.

Its function is as follows. CRISPR (clustered regularly interspaced short palindromic repeat) is an adaptive immune system that provides protection against mobile genetic elements (viruses, transposable elements and conjugative plasmids). CRISPR clusters contain spacers, sequences complementary to antecedent mobile elements, and target invading nucleic acids. CRISPR clusters are transcribed and processed into CRISPR RNA (crRNA). Functions in an unknown fashion to stimulate transcription of fruA independently of the intracellular A- and E-developmental signals. This is CRISPR-associated protein Cas8a1/Csx13 (devT) from Myxococcus xanthus (strain DK1622).